The following is a 1138-amino-acid chain: MKLFPRSILIILVLSFALNLGLVTKTHAKDTLDSIVDILSGLTCETQGVGDLLRTEFSHTCIVAPFFTFAVMNLVSPVLYMNTFLKLKINDSDLFNDSNFGNFPGGQCTRENRIDPKNPELRFALCNNAKLIVSRAKSVAESALAIAKAVLTGGDPWDDIKKAWENKKKEYHIPYSGKPGDDGFAFDAGFPVIYWKIIQDKDRICVSTKGFTGDVPVGCKYMKEPFPKSMYNSFMDVADKDFIQDPKETPTDPLALVSCSAAGGGCYQKAYNASKTAVVMTSPLIECMRQMIARLLISKDVCSFDNVEQVVNLASRQDSALFQFQVGMYKIVTAFLTLYVMFFGFKLLLAGEIPPKSEYINFILKMIFVTYFSIGINITPGNGSPYDRLDGMIQWAFPFLLDGINGLASWVMNAAPSGLCKFNNLSYDGTVSYIALWDALDCRVAHYLGLDILSTLLVENAYRSHDFLNFDFFSFSAPPYIYLLIPAIISGNMMLVSLALSYPLLVISVAAFMVNATIMCMISIVILGILAPLFVPMFLFTYTRNYFDSWVKLMISFLLQPMVVVTFMITMFSVYDYGFYGKCQYKSKLIHNSIENLAQSGGTSSRDVLIFYINNDWDDISQYPDKDAVESCQNSLGYMLNNPITTAFNFAKDSVSEIVDSKPGDTPTDKFLAKFQFLSGVVLGPGMFFMSPKVLFEKIKNILLALVTACFTLYLMYNFSSQLAEFAADMTEGVALNNVAIKPQAIFKAGMAALAAAGAATKGVDQIASRGGVGDLKAGQGGGVSDNIAKSGGGGPNDNIAASGGTSAPTVTTPTASSSVATSSPKTVSSEARSDVVTPPPAPSEAVSPPPASIRTSISTPAPQSNIETESVGKIIRDNNQESKKEIDNTPPPQEKVDNAAPQEKVDSTSKGTGVIDYSFNLKEHENPAGVKQIRENAEIRDKRAEVEKAWNELVASGGGRIRDQQGEETSERRTNAEKKWNELVDSGVVTEIRERDNSVTNKFDKLADELNKSEKAKVEENKNIENDRKENNTTTSPQEKVDSTSRGSGVIDYSFNLKEHENPTGVKQIRENAEIRDKRVKVETAWNELVASGGGRVREQEGGEVSERRANAVKTWDELVKSGVVTEKKDNSSNENS.

The first 28 residues, 1-28, serve as a signal peptide directing secretion; it reads MKLFPRSILIILVLSFALNLGLVTKTHA. 7 helical membrane-spanning segments follow: residues 331–351, 359–379, 392–412, 494–514, 520–540, 554–574, and 699–719; these read IVTA…LLAG, YINF…INIT, MIQW…SWVM, MLVS…AFMV, CMIS…MFLF, MISF…MFSV, and IKNI…MYNF. Residues 775–784 show a composition bias toward gly residues; the sequence is DLKAGQGGGV. Disordered stretches follow at residues 775–914, 958–977, and 995–1071; these read DLKA…KGTG, GGGR…RTNA, and ERDN…KQIR. Residues 801 to 830 show a composition bias toward low complexity; that stretch reads AASGGTSAPTVTTPTASSSVATSSPKTVSS. Over residues 838 to 852 the composition is skewed to pro residues; sequence TPPPAPSEAVSPPPA. The span at 854–869 shows a compositional bias: polar residues; sequence IRTSISTPAPQSNIET. Basic and acidic residues-rich tracts occupy residues 875 to 888, 961 to 977, 995 to 1032, and 1058 to 1071; these read IIRD…KEID, RIRD…RTNA, ERDN…RKEN, and LKEH…KQIR.

The protein belongs to the TrbL/VirB6 family.

Its subcellular location is the cell membrane. This is an uncharacterized protein from Rickettsia felis (strain ATCC VR-1525 / URRWXCal2) (Rickettsia azadi).